The sequence spans 2575 residues: Non-reducing polyketide synthase pks11 (2575 aa).

Residues 89–228 (LANIILSPLV…ASKTVSTLQG (140 aa)) enclose the Starter acyltransferase (SAT) domain. Catalysis depends on Cys129, which acts as the Nucleophile; for transacylase activity. Catalysis depends on His247, which acts as the Proton donor/acceptor; for transacylase activity. One can recognise a Ketosynthase family 3 (KS3) domain in the interval 373 to 790 (EDDIAVVGMS…GSNASAVVTE (418 aa)). Catalysis depends on for beta-ketoacyl synthase activity residues Cys538, His673, and His713. A Malonyl-CoA:ACP transacylase (MAT) domain is found at 901–1192 (FGGQISTYVG…TNMASRALGS (292 aa)). Positions 1276–1409 (PKGLWSFIDY…GQIIFVSTDN (134 aa)) are N-terminal hotdog fold. The 311-residue stretch at 1276–1586 (PKGLWSFIDY…YHKVAKATMS (311 aa)) folds into the PKS/mFAS DH domain. The interval 1307 to 1584 (LVSGHIIAQT…VNYHKVAKAT (278 aa)) is product template (PT) domain. The Proton acceptor; for dehydratase activity role is filled by His1311. Positions 1437–1586 (ADDIIQGRNI…YHKVAKATMS (150 aa)) are C-terminal hotdog fold. The active-site Proton donor; for dehydratase activity is Asp1493. Residues 1597-1606 (TTSTSTNVKS) are compositionally biased toward polar residues. The segment at 1597–1636 (TTSTSTNVKSSPAAAEGSSPVENGASGSGSKAKKTKSGAG) is disordered. Positions 1637 to 1711 (QDVVNKTKGL…GLVQIIKSTL (75 aa)) constitute a Carrier domain. The residue at position 1671 (Ser1671) is an O-(pantetheine 4'-phosphoryl)serine. The disordered stretch occupies residues 1713 to 1762 (VSDDEEGSDQEGSEASSSESSTTFTPSTTATTVSDVEDNGNEKSIGKEKS). Residues 1714-1724 (SDDEEGSDQEG) show a composition bias toward acidic residues. A compositionally biased stretch (low complexity) spans 1725-1746 (SEASSSESSTTFTPSTTATTVS). Over residues 1752–1762 (GNEKSIGKEKS) the composition is skewed to basic and acidic residues. Residues 1835 to 2130 (LTRIPHDPQH…HIDWTDGNSP (296 aa)) form a methyltransferase domain region. Residues 2204-2448 (ITGATGSLGS…LCWTPVDDVA (245 aa)) enclose the Thioester reductase (TE) domain.

It depends on pantetheine 4'-phosphate as a cofactor.

Its pathway is secondary metabolite biosynthesis. Non-reducing polyketide synthase; part of the gene cluster that mediates the biosynthesis of mitorubrinol and mitorubrinic acid, two virulence factors that improve T.marneffei intracellular survival in macrophages. The two polyketide synthases pks12 and pks11 are probably responsible for sequential use in the biosynthesis of mitorubrinol and mitorubrinic acid. The first part of the biosynthesis is probably catalyzed by pks12, which synthesized orsellinic acid. This tetraketide is then used as a starter unit for pks11, which possesses a SAT domain, in the second part of the biosynthesis. Pks11, contains a methyltransferase domain, also served that methylates the products, using a methyl group from S-adenosylmethionine. The polypeptide is Non-reducing polyketide synthase pks11 (Talaromyces marneffei (Penicillium marneffei)).